Reading from the N-terminus, the 357-residue chain is 3-dehydroquinate synthase (357 aa).

Residues 99-103 (GATGD), 123-124 (TT), Lys135, Lys144, and 162-165 (FLET) each bind NAD(+). Residues Glu177, His247, and His261 each contribute to the Zn(2+) site.

The protein belongs to the sugar phosphate cyclases superfamily. Dehydroquinate synthase family. The cofactor is Co(2+). Requires Zn(2+) as cofactor. It depends on NAD(+) as a cofactor.

It localises to the cytoplasm. The catalysed reaction is 7-phospho-2-dehydro-3-deoxy-D-arabino-heptonate = 3-dehydroquinate + phosphate. The protein operates within metabolic intermediate biosynthesis; chorismate biosynthesis; chorismate from D-erythrose 4-phosphate and phosphoenolpyruvate: step 2/7. Catalyzes the conversion of 3-deoxy-D-arabino-heptulosonate 7-phosphate (DAHP) to dehydroquinate (DHQ). The chain is 3-dehydroquinate synthase from Macrococcus caseolyticus (strain JCSC5402) (Macrococcoides caseolyticum).